A 709-amino-acid polypeptide reads, in one-letter code: Polyribonucleotide nucleotidyltransferase (709 aa).

2 residues coordinate Mg(2+): D489 and D495. Residues 556-615 form the KH domain; that stretch reads PKIDMIKIDVDKIKVVIGKGGETIDKIIAETGVKIDIDEEGNVSIFSSDQAAIDRTKDII. An S1 motif domain is found at 625–693; that stretch reads GEVYHAKVVR…DKGRVDASMK (69 aa).

The protein belongs to the polyribonucleotide nucleotidyltransferase family. Requires Mg(2+) as cofactor.

The protein localises to the cytoplasm. The catalysed reaction is RNA(n+1) + phosphate = RNA(n) + a ribonucleoside 5'-diphosphate. Its function is as follows. Involved in mRNA degradation. Catalyzes the phosphorolysis of single-stranded polyribonucleotides processively in the 3'- to 5'-direction. In Streptococcus agalactiae serotype V (strain ATCC BAA-611 / 2603 V/R), this protein is Polyribonucleotide nucleotidyltransferase.